A 159-amino-acid chain; its full sequence is Phosphopantetheine adenylyltransferase (159 aa).

Substrate is bound at residue Thr-9. ATP is bound by residues 9–10 (TF) and His-17. Lys-41, Leu-73, and Arg-87 together coordinate substrate. ATP-binding positions include 88 to 90 (GLR), Glu-98, and 123 to 129 (YSFISST).

This sequence belongs to the bacterial CoaD family. Homohexamer. Requires Mg(2+) as cofactor.

It localises to the cytoplasm. It catalyses the reaction (R)-4'-phosphopantetheine + ATP + H(+) = 3'-dephospho-CoA + diphosphate. It participates in cofactor biosynthesis; coenzyme A biosynthesis; CoA from (R)-pantothenate: step 4/5. Reversibly transfers an adenylyl group from ATP to 4'-phosphopantetheine, yielding dephospho-CoA (dPCoA) and pyrophosphate. The chain is Phosphopantetheine adenylyltransferase from Pseudomonas syringae pv. syringae (strain B728a).